We begin with the raw amino-acid sequence, 83 residues long: Protein FAM240A (83 aa).

The protein belongs to the FAM240 family.

The protein is Protein FAM240A of Homo sapiens (Human).